A 482-amino-acid polypeptide reads, in one-letter code: Vanillin dehydrogenase (482 aa).

228-233 (GSTHVG) provides a ligand contact to NAD(+). Active-site residues include Glu250 and Cys284.

The protein belongs to the aldehyde dehydrogenase family.

It catalyses the reaction vanillin + NAD(+) + H2O = vanillate + NADH + 2 H(+). In terms of biological role, catalyzes the NAD-dependent oxidation of vanillin to vanillic acid. The chain is Vanillin dehydrogenase (vdh) from Pseudomonas fluorescens.